Reading from the N-terminus, the 570-residue chain is 4-hydroxy-7-methoxy-3-oxo-3,4-dihydro-2H-1,4-benzoxazin-2-yl glucoside beta-D-glucosidase 1c, chloroplastic (570 aa).

Residues 1–50 (MALLAAATLNPTTHLSIRSRAGHNSENLWLRSAASSQKSKGRFCNLTVRA) constitute a chloroplast transit peptide. A beta-D-glucoside-binding positions include Gln-92, His-194, and 239–240 (NE). The active-site Proton donor is the Glu-240. A disulfide bond links Cys-259 and Cys-265. Residues Tyr-383, Glu-456, Trp-504, 511-512 (EW), and Phe-520 each bind a beta-D-glucoside. The active-site Nucleophile is Glu-456.

It belongs to the glycosyl hydrolase 1 family. Homo- and heterohexamers. In terms of tissue distribution, expressed in young seedlings early after germination.

It localises to the plastid. The protein localises to the chloroplast. The enzyme catalyses Hydrolysis of terminal, non-reducing beta-D-glucosyl residues with release of beta-D-glucose.. It catalyses the reaction DIMBOA beta-D-glucoside + H2O = DIMBOA + D-glucose. The catalysed reaction is DIBOA beta-D-glucoside + H2O = DIBOA + D-glucose. Acts in defense of young plant parts against pests via the production of hydroxamic acids from hydroxamic acid glucosides. Enzymatic activity is highly correlated with plant growth. The preferred substrate is DIMBOA-beta-D-glucoside. This chain is 4-hydroxy-7-methoxy-3-oxo-3,4-dihydro-2H-1,4-benzoxazin-2-yl glucoside beta-D-glucosidase 1c, chloroplastic (GLU1C), found in Triticum aestivum (Wheat).